The sequence spans 494 residues: MLTSKGQGFLHGGLCLWLCVFTPFFKGCVGCATEERLFHKLFSHYNQFIRPVENVSDPVTVHFEVAITQLANVDEVNQIMETNLWLRHIWNDYKLRWDPMEYDGIETLRVPADKIWKPDIVLYNNAVGDFQVEGKTKALLKYNGMITWTPPAIFKSSCPMDITFFPFDHQNCSLKFGSWTYDKAEIDLLIIGSKVDMNDFWENSEWEIIDASGYKHDIKYNCCEEIYTDITYSFYIRRLPMFYTINLIIPCLFISFLTVLVFYLPSDCGEKVTLCISVLLSLTVFLLVITETIPSTSLVVPLVGEYLLFTMIFVTLSIVVTVFVLNIHYRTPTTHTMPRWVKTVFLKLLPQVLLMRWPLDKTRGTGSDAVPRGLARRPAKGKLASHGEPRHLKECFHCHKSNELATSKRRLSHQPLQWVVENSEHSPEVEDVINSVQFIAENMKSHNETKEVEDDWKYVAMVVDRVFLWVFIIVCVFGTAGLFLQPLLGNTGKS.

The N-terminal stretch at 1 to 25 is a signal peptide; sequence MLTSKGQGFLHGGLCLWLCVFTPFF. Residues 26–239 lie on the Extracellular side of the membrane; the sequence is KGCVGCATEE…ITYSFYIRRL (214 aa). N54 and N171 each carry an N-linked (GlcNAc...) asparagine glycan. 2 disulfides stabilise this stretch: C158-C172 and C222-C223. A run of 3 helical transmembrane segments spans residues 240 to 264, 272 to 290, and 306 to 327; these read PMFYTINLIIPCLFISFLTVLVFYL, VTLCISVLLSLTVFLLVIT, and YLLFTMIFVTLSIVVTVFVLNI. The Cytoplasmic portion of the chain corresponds to 328–465; sequence HYRTPTTHTM…WKYVAMVVDR (138 aa). At S401 the chain carries Phosphoserine. The chain crosses the membrane as a helical span at residues 466–484; it reads VFLWVFIIVCVFGTAGLFL.

This sequence belongs to the ligand-gated ion channel (TC 1.A.9) family. Acetylcholine receptor (TC 1.A.9.1) subfamily. Alpha-6/CHRNA6 sub-subfamily. As to quaternary structure, neuronal AChR is composed of two different types of subunits: alpha and non-alpha (beta). CHRNA6/alpha-6 subunit can be combined to CHRNB2/beta-2, CHRNA4/alpha-4 and CHRNB3/beta-3 to give rise to functional receptors. Heteropentamers containing CHRNB3 have an stoichiometry of (CHRNA6:CHRNB2)2:CHRNB3. Interacts with LYPD6.

It is found in the synaptic cell membrane. It carries out the reaction Ca(2+)(in) = Ca(2+)(out). The enzyme catalyses K(+)(in) = K(+)(out). The catalysed reaction is Na(+)(in) = Na(+)(out). Its activity is regulated as follows. Activated by a myriad of ligands such as acetylcholine, cytisine and nicotine. CHRNA6 nAChR activity is inhibited by the antagonists alpha-conotoxin MII and PIA, a small disulfide-constrained peptides from cone snails. Its function is as follows. Component of neuronal acetylcholine receptors (nAChRs) that function as pentameric, ligand-gated cation channels with high calcium permeability among other activities. nAChRs are excitatory neurotrasnmitter receptors formed by a collection of nAChR subunits known to mediate synaptic transmission in the nervous system and the neuromuscular junction. Each nAchR subunit confers differential attributes to channel properties, including activation, deactivation and desensitization kinetics, pH sensitivity, cation permeability, and binding to allosteric modulators. CHRNA6 forms pentameric channels with CHRNB2, CHRNB3 and CHRNA4 that exhibit high sensitivity to ACh and nicotine and are predominantly expressed in only a few brain areas, including dopaminergic neurons, norepirephrine neurons and cells of the visual system. nAChrs containing CHRNA6 subunits mediate endogenous cholinergic modulation of dopamine and gamma-aminobutyric acid (GABA) release in response to nicotine at nerve terminals. The protein is Neuronal acetylcholine receptor subunit alpha-6 of Homo sapiens (Human).